A 141-amino-acid chain; its full sequence is Nucleoside diphosphate kinase (141 aa).

6 residues coordinate ATP: K11, F59, R87, T93, R104, and N114. The Pros-phosphohistidine intermediate role is filled by H117.

Belongs to the NDK family. Homotetramer. Requires Mg(2+) as cofactor.

The protein localises to the cytoplasm. It catalyses the reaction a 2'-deoxyribonucleoside 5'-diphosphate + ATP = a 2'-deoxyribonucleoside 5'-triphosphate + ADP. The catalysed reaction is a ribonucleoside 5'-diphosphate + ATP = a ribonucleoside 5'-triphosphate + ADP. In terms of biological role, major role in the synthesis of nucleoside triphosphates other than ATP. The ATP gamma phosphate is transferred to the NDP beta phosphate via a ping-pong mechanism, using a phosphorylated active-site intermediate. This chain is Nucleoside diphosphate kinase, found in Ralstonia pickettii (strain 12J).